The sequence spans 321 residues: Urease accessory protein UreD (321 aa).

Belongs to the UreD family. In terms of assembly, ureD, UreF and UreG form a complex that acts as a GTP-hydrolysis-dependent molecular chaperone, activating the urease apoprotein by helping to assemble the nickel containing metallocenter of UreC. The UreE protein probably delivers the nickel.

It is found in the cytoplasm. In terms of biological role, required for maturation of urease via the functional incorporation of the urease nickel metallocenter. This Yersinia pseudotuberculosis serotype O:1b (strain IP 31758) protein is Urease accessory protein UreD.